A 396-amino-acid chain; its full sequence is Ribosomal RNA large subunit methyltransferase I (396 aa).

Positions 2 to 79 (AVRIKLKPGR…REEEIDREFF (78 aa)) constitute a PUA domain.

The protein belongs to the methyltransferase superfamily. RlmI family.

It localises to the cytoplasm. It catalyses the reaction cytidine(1962) in 23S rRNA + S-adenosyl-L-methionine = 5-methylcytidine(1962) in 23S rRNA + S-adenosyl-L-homocysteine + H(+). Functionally, specifically methylates the cytosine at position 1962 (m5C1962) of 23S rRNA. The chain is Ribosomal RNA large subunit methyltransferase I from Shewanella sp. (strain ANA-3).